Here is a 501-residue protein sequence, read N- to C-terminus: Cytochrome P450 monooxygenase esdpH (501 aa).

Residues 5-22 (RVGILIIGVLATATFWLC) form a helical membrane-spanning segment. Cys446 is a heme binding site.

The protein belongs to the cytochrome P450 family. Heme serves as cofactor.

The protein localises to the membrane. The protein operates within secondary metabolite biosynthesis; terpenoid biosynthesis. In terms of biological role, cytochrome P450 monooxygenase; part of the cluster that mediates the biosynthesis of shearones, diterpenoid pyrones (DPs) which are structurally diverse meroterpenoids consisting of a diterpene linked by a pyrone, and which may exhibit a range of bioactivities. Whitin the pathway, esdpH takes part in the molecular scaffold modification via the hydroxylation at C-6' and can transform shearone C into shearone E, shearone D into shearone F, and shearone H into shearone I, the latter being the final product of the pathway. The molecular scaffold is commonly biosynthesized by a series of enzymes including the non-reducing polyketide synthase (NR-PKS) esdpA that generates an alpha-pyrone; the prenyltransferase esdpC that attaches a geranylgeranyl pyrophosphate (GGPP) produced by the GGPP synthase (GGPPS) esdpD onto the pyrone unit; the FAD-dependent monooxygenase esdpE that converts an olefin on the diterpene unit into an epoxide; and the terpene cyclase esdpB that catalyzes the cyclization reactions to give the molecular backbone shearone A. In the modification steps, esdpF oxidizes the hydroxy group to a ketone at C-3 and esdpG then attaches hydroxy groups at both C-11 and C-12. After that, esdpI hydroxylates at C-20 and esdpH hydroxylates at C-6'. The ether bridge is generated by nucleophilic attack of the hydroxy group at C-20 to the carbonyl carbon at C-3. EsdpH can also functions prior to esdpI. The different combinations of these modification enzymes lead to the production of diverse shearone derivatives, shearone I being the end product of the pathway. The alpha-ketoglutarate-dependent dioxygenase esdpJ seems not to be involved in this pathway. The protein is Cytochrome P450 monooxygenase esdpH of Penicillium shearii (Eupenicillium shearii).